A 629-amino-acid polypeptide reads, in one-letter code: Glutamyl-tRNA(Gln) amidotransferase subunit E (629 aa).

The segment at 405–426 (PEETRRALPDGNTQYMRPLPGK) is disordered.

This sequence belongs to the GatB/GatE family. GatE subfamily. Heterodimer of GatD and GatE.

It carries out the reaction L-glutamyl-tRNA(Gln) + L-glutamine + ATP + H2O = L-glutaminyl-tRNA(Gln) + L-glutamate + ADP + phosphate + H(+). Functionally, allows the formation of correctly charged Gln-tRNA(Gln) through the transamidation of misacylated Glu-tRNA(Gln) in organisms which lack glutaminyl-tRNA synthetase. The reaction takes place in the presence of glutamine and ATP through an activated gamma-phospho-Glu-tRNA(Gln). The GatDE system is specific for glutamate and does not act on aspartate. This Thermococcus sibiricus (strain DSM 12597 / MM 739) protein is Glutamyl-tRNA(Gln) amidotransferase subunit E.